Consider the following 306-residue polypeptide: tRNA pseudouridine synthase B (306 aa).

The active-site Nucleophile is aspartate 43.

Belongs to the pseudouridine synthase TruB family. Type 1 subfamily.

The catalysed reaction is uridine(55) in tRNA = pseudouridine(55) in tRNA. Responsible for synthesis of pseudouridine from uracil-55 in the psi GC loop of transfer RNAs. The sequence is that of tRNA pseudouridine synthase B from Lacticaseibacillus casei (strain BL23) (Lactobacillus casei).